The chain runs to 815 residues: DNA replication licensing factor Mcm6 (815 aa).

The C4-type zinc-finger motif lies at Cys152 to Cys179. The MCM domain maps to Leu338–Ile544. ATP contacts are provided by Ser391, Thr392, Ala393, Lys394, Ser395, and Asn496. Residues Ser520–Asp523 carry the Arginine finger motif. 2 residues coordinate ADP: Arg611 and Glu614. The segment at Asp672–Ser693 is disordered. Polar residues predominate over residues Asn678–Ser693.

Belongs to the MCM family. In terms of assembly, component of the Mcm2-7 complex. The complex forms a toroidal hexameric ring with the proposed subunit order Mcm2-Mcm6-Mcm4-Mcm7-Mcm3-Mcm5. The heterodimers of mcm4/mcm6 and mcm3/mcm5 interact with mcm2 and mcm7.

The protein resides in the nucleus. The enzyme catalyses ATP + H2O = ADP + phosphate + H(+). In terms of biological role, acts as a component of the Mcm2-7 complex (Mcm complex) which is the putative replicative helicase essential for 'once per cell cycle' DNA replication initiation and elongation in eukaryotic cells. Core component of CDC45-MCM-GINS (CMG) helicase, the molecular machine that unwinds template DNA during replication, and around which the replisome is built. The active ATPase sites in the Mcm2-7 ring are formed through the interaction surfaces of two neighboring subunits such that a critical structure of a conserved arginine finger motif is provided in trans relative to the ATP-binding site of the Walker A box of the adjacent subunit. The six ATPase active sites, however, are likely to contribute differentially to the complex helicase activity Required for DNA replication and cell proliferation. Required for mitotic cycles, endocycles, and the special S phase associated with the amplification of chorion genes; has a role in origin unwinding or fork elongation at chorion loci. Functionally, acts as a component of the MCM2-7 complex (MCM complex) which is the replicative helicase essential for 'once per cell cycle' DNA replication initiation and elongation in eukaryotic cells. Core component of CDC45-MCM-GINS (CMG) helicase, the molecular machine that unwinds template DNA during replication, and around which the replisome is built. The active ATPase sites in the MCM2-7 ring are formed through the interaction surfaces of two neighboring subunits such that a critical structure of a conserved arginine finger motif is provided in trans relative to the ATP-binding site of the Walker A box of the adjacent subunit. The six ATPase active sites, however, are likely to contribute differentially to the complex helicase activity. The protein is DNA replication licensing factor Mcm6 (Mcm6) of Drosophila pseudoobscura pseudoobscura (Fruit fly).